The following is a 3010-amino-acid chain: Genome polyprotein (3010 aa).

N-acetylserine; by host is present on serine 2. An interaction with STAT1 region spans residues 2–23; the sequence is STNPKPQRKTKRNTNRRPQDVK. An interaction with EIF2AK2/PKR region spans residues 2–58; it reads STNPKPQRKTKRNTNRRPQDVKFPGGGQIVGGVYLLPRRGPRLGVRATRKTSERSQP. Residues 2–59 are interaction with DDX3X; the sequence is STNPKPQRKTKRNTNRRPQDVKFPGGGQIVGGVYLLPRRGPRLGVRATRKTSERSQPR. Residues 2–75 are disordered; that stretch reads STNPKPQRKT…PKARQPEGRA (74 aa). The Cytoplasmic segment spans residues 2–168; that stretch reads STNPKPQRKT…EDGVNYATGN (167 aa). 2 short sequence motifs (nuclear localization signal) span residues 5–13 and 38–43; these read PKPQRKTKR and PRRGPR. Positions 7 to 16 are enriched in basic residues; sequence PQRKTKRNTN. A compositionally biased stretch (low complexity) spans 32–47; the sequence is GGVYLLPRRGPRLGVR. Residue serine 53 is modified to Phosphoserine; by host. 2 short sequence motifs (nuclear localization signal) span residues 58-64 and 66-71; these read PRGRRQP and PKARQP. Serine 99 bears the Phosphoserine; by host mark. Residues 112–152 are important for endoplasmic reticulum and mitochondrial localization; sequence PRRRSRNLGKVIDTLTCGFADLMGYIPLVGAPLGGAARALA. Serine 116 carries the phosphoserine; by host PKA modification. The interval 122–173 is interaction with APOA2; the sequence is VIDTLTCGFADLMGYIPLVGAPLGGAARALAHGVRVLEDGVNYATGNLPGCS. An important for lipid droplets localization region spans residues 164-167; that stretch reads YATG. The chain crosses the membrane as a helical span at residues 169–189; sequence LPGCSFSIFLLALLSCLTIPA. Residues 178–191 constitute a propeptide, ER anchor for the core protein, removed in mature form by host signal peptidase; sequence LLALLSCLTIPASA. Topologically, residues 190–358 are lumenal; sequence SAYEVRNVSG…AGAHWGVLAG (169 aa). N-linked (GlcNAc...) asparagine; by host glycosylation is found at asparagine 196, asparagine 209, asparagine 234, and asparagine 250. The important for fusion stretch occupies residues 265-296; it reads LVGAAALCSAMYVGDLCGSVFLVAQLFTFSPR. N-linked (GlcNAc...) asparagine; by host glycosylation is present at asparagine 305. A helical membrane pass occupies residues 359 to 379; that stretch reads LAYYSMVGNWAKVLIVMLLFA. Residues 380–725 are Lumenal-facing; sequence GVDGGTYVTG…WEYVLLLFLL (346 aa). Positions 385–411 are HVR1; it reads TYVTGGTMAKNTLGITSLFSPGSSQKI. N-linked (GlcNAc...) asparagine; by host glycosylation occurs at asparagine 417. Residues asparagine 423, asparagine 430, and asparagine 448 are each glycosylated (N-linked (GlcNAc...) (high mannose) asparagine; by host). 4 disulfides stabilise this stretch: cysteine 429–cysteine 552, cysteine 452–cysteine 459, cysteine 486–cysteine 494, and cysteine 503–cysteine 508. An HVR2 region spans residues 474–482; that stretch reads YNESHSSDQ. The CD81-binding 1 stretch occupies residues 480–493; that stretch reads SDQRPYCWHYAPRP. Residue asparagine 532 is glycosylated (N-linked (GlcNAc...) (high mannose) asparagine; by host). The tract at residues 544–551 is CD81-binding 2; sequence PPQGNWFG. A glycan (N-linked (GlcNAc...) (high mannose) asparagine; by host) is linked at asparagine 556. Cysteine 564 and cysteine 569 are joined by a disulfide. A glycan (N-linked (GlcNAc...) (high mannose) asparagine; by host) is linked at asparagine 576. 3 disulfide bridges follow: cysteine 581–cysteine 585, cysteine 597–cysteine 620, and cysteine 607–cysteine 644. Asparagine 623 and asparagine 645 each carry an N-linked (GlcNAc...) (high mannose) asparagine; by host glycan. An intrachain disulfide couples cysteine 652 to cysteine 677. The tract at residues 660–671 is EIF2AK2/eIF2-alpha phosphorylation homology domain (PePHD); the sequence is SELSPLLLSTTE. A helical membrane pass occupies residues 726-746; the sequence is LADARVCACLWMMLLIAQAEA. Residues 747–757 lie on the Lumenal side of the membrane; that stretch reads ALENLVVLNAA. A helical transmembrane segment spans residues 758–778; sequence SVAGAHGILSFLVFFCAAWYI. The Cytoplasmic portion of the chain corresponds to 779–781; the sequence is KGR. Residues 782-803 traverse the membrane as a helical segment; sequence LVPGAAYALYGVWPLLLLLLAL. Over 804-813 the chain is Lumenal; that stretch reads PPRAYAMDRE. Residues 814–834 traverse the membrane as a helical segment; that stretch reads MAASCGGAVFVGLILLTLSPH. Topologically, residues 835-838 are cytoplasmic; sequence YKLF. A helical transmembrane segment spans residues 839–859; sequence LARLIWWLQYFITRAEAHLQV. The Lumenal segment spans residues 860-881; the sequence is WIPPLNVRGGRDAVILLTCAIH. Residues 882 to 902 form a helical membrane-spanning segment; the sequence is PELIFTITKILLAILGPLMVL. The Peptidase C18 domain occupies 903 to 1026; sequence QAGITKVPYF…SLEGQGWRLL (124 aa). Residues 903 to 1657 are Cytoplasmic-facing; it reads QAGITKVPYF…CMSADLEVVT (755 aa). Residues 904-1206 form a protease NS2-3 region; sequence AGITKVPYFV…PVESMETTMR (303 aa). Cysteine 922 is lipidated: S-palmitoyl cysteine; by host. The interaction with host SCPS1 stretch occupies residues 929 to 949; it reads AGGHYVQMALMKLAALTGTYV. Residues histidine 952, glutamate 972, and cysteine 993 each act as for protease NS2 activity; shared with dimeric partner in the active site. One can recognise a Peptidase S29 domain in the interval 1027 to 1208; the sequence is APITAYSQQT…ESMETTMRSP (182 aa). Residues histidine 1083 and aspartate 1107 each act as charge relay system; for serine protease NS3 activity in the active site. Zn(2+)-binding residues include cysteine 1123 and cysteine 1125. Serine 1165 serves as the catalytic Charge relay system; for serine protease NS3 activity. Residues cysteine 1171 and histidine 1175 each contribute to the Zn(2+) site. Residues 1217–1369 form the Helicase ATP-binding domain; sequence PAVPQTFQVA…PNIEEVALSS (153 aa). Position 1230 to 1237 (1230 to 1237) interacts with ATP; the sequence is APTGSGKS. Mg(2+) contacts are provided by serine 1237 and glutamate 1317. Positions 1316–1319 match the DECH box motif; sequence DECH. An RNA-binding region spans residues 1486–1497; sequence QRRGRTGRGRMG. Residues 1658 to 1678 form a helical membrane-spanning segment; the sequence is STWVLVGGVLAALAAYCLTTG. The NS3-binding stretch occupies residues 1679–1690; sequence SVVIVGRIILSG. The Cytoplasmic portion of the chain corresponds to 1679–1805; that stretch reads SVVIVGRIIL…SITSPLTTQH (127 aa). The chain crosses the membrane as a helical span at residues 1806–1826; the sequence is TLLFNILGGWVAAQLAPPSAA. The Lumenal segment spans residues 1827-1828; the sequence is SA. The helical transmembrane segment at 1829–1849 threads the bilayer; it reads FVGAGIAGAAVGSIGLGKVLV. Residues 1833 to 1861 are glycine zipper; it reads GIAGAAVGSIGLGKVLVDILAGYGAGVAG. Position 1850 (aspartate 1850) is a topological domain, cytoplasmic. A helical membrane pass occupies residues 1851–1871; sequence ILAGYGAGVAGALVAFKVMSG. At 1872-1881 the chain is on the lumenal side; sequence EMPSTEDLVN. A helical transmembrane segment spans residues 1882–1902; the sequence is LLPAILSPGALVVGVVCAAIL. The Cytoplasmic portion of the chain corresponds to 1903 to 1972; the sequence is RRHVGPGEGA…WINEDCSTPC (70 aa). S-palmitoyl cysteine; by host attachment occurs at residues cysteine 1968 and cysteine 1972. An intramembrane segment occupies 1973–2003; sequence SGSWLRDVWDWICTVLTDFKTWLQSKLLPRL. Residues 1978–1998 form a membrane-binding region; the sequence is RDVWDWICTVLTDFKTWLQSK. At 2004-2989 the chain is on the cytoplasmic side; it reads PGVPFFSCQR…YHSLSRARPR (986 aa). The segment at 2005–2221 is RNA-binding; that stretch reads GVPFFSCQRG…KATCTTRHDS (217 aa). The Zn(2+) site is built by cysteine 2011, cysteine 2029, cysteine 2031, and cysteine 2052. Positions 2120–2208 are FKBP8-binding; sequence EFFTEVDGVR…ASSSASQLSA (89 aa). Residues 2120–2332 are transcriptional activation; it reads EFFTEVDGVR…PIPPPRRKRT (213 aa). The interaction with non-structural protein 4A stretch occupies residues 2135–2139; sequence PACKP. The segment at 2187–2219 is disordered; sequence KRRLARGSPPSLASSSASQLSAPSLKATCTTRH. The interval 2189–2441 is interaction with host SKP2; that stretch reads RLARGSPPSL…PCAAEETKLP (253 aa). Serine 2194 carries the phosphoserine; by host; in p56 modification. A compositionally biased stretch (low complexity) spans 2194–2211; it reads SPPSLASSSASQLSAPSL. Serine 2197 carries the phosphoserine; by host; in p58 modification. Serine 2201 is modified (phosphoserine; by host; in p56 and p58, regulates intracellular NS5A distribution). 3 positions are modified to phosphoserine; by host; in p58: serine 2204, serine 2207, and serine 2210. 2 ISDR regions span residues 2206-2245 and 2210-2249; these read LSAP…TRVE and SLKA…SENK. The tract at residues 2210–2275 is EIF2AK2/PKR-binding; that stretch reads SLKATCTTRH…REVSVPAEIL (66 aa). The NS4B-binding stretch occupies residues 2249-2306; that stretch reads KVVILDSFEPLQAEEDEREVSVPAEILRRSRKFPRAMPIWARPDYNPPLLESWKDPDY. The short motif at 2322-2325 is the SH3-binding element; it reads PPIP. The Nuclear localization signal signature appears at 2326-2334; it reads PPRRKRTVV. Residues 2332–2441 are interaction with host IFI27; it reads TVVLSESTVS…PCAAEETKLP (110 aa). Lysine 2350 participates in a covalent cross-link: Glycyl lysine isopeptide (Lys-Gly) (interchain with G-Cter in ubiquitin). Residues 2351–2371 are compositionally biased toward polar residues; it reads TFGSSESSAVDSGTATASPDQ. Positions 2351 to 2407 are disordered; sequence TFGSSESSAVDSGTATASPDQPSDDGDAGSDVESYSSMPPLEGEPGDPDLSDGSWST. The segment at 2354-2377 is V3; the sequence is SSESSAVDSGTATASPDQPSDDGD. Serine 2448 and serine 2461 each carry phosphoserine; by host. The RdRp catalytic domain occupies 2633-2751; the sequence is PMGFAYDTRC…ICESAGTQED (119 aa). 3 residues coordinate Mg(2+): aspartate 2639, aspartate 2737, and aspartate 2738. Residues 2990–3010 form a helical membrane-spanning segment; the sequence is WFMWCLLLLSVGVGIYLLPNR.

The protein belongs to the hepacivirus polyprotein family. In terms of assembly, homooligomer. Interacts with E1 (via C-terminus). Interacts with the non-structural protein 5A. Interacts (via N-terminus) with host STAT1 (via SH2 domain); this interaction results in decreased STAT1 phosphorylation and ubiquitin-mediated proteasome-dependent STAT1 degradation, leading to decreased IFN-stimulated gene transcription. Interacts with host STAT3; this interaction constitutively activates STAT3. Interacts with host LTBR receptor. Interacts with host TNFRSF1A receptor and possibly induces apoptosis. Interacts with host HNRPK. Interacts with host YWHAE. Interacts with host UBE3A/E6AP. Interacts with host DDX3X. Interacts with host APOA2. Interacts with host RXRA protein. Interacts with host SP110 isoform 3/Sp110b; this interaction sequesters the transcriptional corepressor SP110 away from the nucleus. Interacts with host CREB3 nuclear transcription protein; this interaction triggers cell transformation. Interacts with host ACY3. Interacts with host C1QR1. Interacts with host RBM24; this interaction, which enhances the interaction of the mature core protein with 5'-UTR, may inhibit viral translation and favor replication. Interacts with host EIF2AK2/PKR; this interaction induces the autophosphorylation of EIF2AK2. Part of the viral assembly initiation complex composed of NS2, E1, E2, NS3, NS4A, NS5A and the mature core protein. Forms a heterodimer with envelope glycoprotein E2. Interacts with mature core protein. Interacts with protease NS2. The heterodimer E1/E2 interacts with host CLDN1; this interaction plays a role in viral entry into host cell. Interacts with host SPSB2 (via C-terminus). Part of the viral assembly initiation complex composed of NS2, E1, E2, NS3, NS4A, NS5A and the mature core protein. Interacts with human PLSCR1. Interacts with host NEURL3; this interaction prevents E1 binding to glycoprotein E2. As to quaternary structure, forms a heterodimer with envelope glycoprotein E1. Interacts with host CD81 and SCARB1 receptors; these interactions play a role in viral entry into host cell. Interacts with host EIF2AK2/PKR; this interaction inhibits EIF2AK2 and probably allows the virus to evade the innate immune response. Interacts with host CD209/DC-SIGN and CLEC4M/DC-SIGNR. Interact with host SPCS1; this interaction is essential for viral particle assembly. Interacts with protease NS2. The heterodimer E1/E2 interacts with host CLDN1; this interaction plays a role in viral entry into host cell. Part of the viral assembly initiation complex composed of NS2, E1, E2, NS3, NS4A, NS5A and the mature core protein. Interacts with host SLC3A2/4F2hc; the interaction may facilitate viral entry into host cell. Interacts with human PLSCR1. In terms of assembly, homohexamer. Homoheptamer. Interacts with protease NS2. Homodimer. Interacts with host SPCS1; this interaction is essential for viral particle assembly. Interacts with envelope glycoprotein E1. Interacts with envelope glycoprotein E2. Interacts with viroporin p7. Interacts with serine protease/helicase NS3. Part of the replication complex composed of NS2, NS3, NS4A, NS4B, NS5A and the RNA-directed RNA polymerase embedded in an ER-derived membranous web. Part of the viral assembly initiation complex composed of NS2, E1, E2, NS3, NS4A, NS5A and the mature core protein. As to quaternary structure, interacts with protease NS2. Interacts with non-structural protein 4A; this interaction stabilizes the folding of NS3 serine protease. NS3-NS4A interaction is essential for NS3 activation and allows membrane anchorage of the latter. NS3/NS4A complex also prevents phosphorylation of host IRF3, thus preventing the establishment of dsRNA induced antiviral state. Interacts with host MAVS; this interaction leads to the cleavage and inhibition of host MAVS. Interacts with host TICAM1; this interaction leads to the cleavage and inhibition of host TICAM1. Interacts with host TANK-binding kinase/TBK1; this interaction results in the inhibition of the association between TBK1 and IRF3, which leads to the inhibition of IRF3 activation. Interacts with host RBM24. Part of the replication complex composed of NS2, NS3, NS4A, NS4B, NS5A and the RNA-directed RNA polymerase embedded in an ER-derived membranous web. Part of the viral assembly initiation complex composed of NS2, E1, E2, NS3, NS4A, NS5A and the mature core protein. In terms of assembly, monomer. Homodimer; dimerization is required for RNA-binding. Interacts with the mature core protein. Interacts with host GRB2. Interacts with host BIN1. Interacts with host PIK3R1. Interacts with host SRCAP. Interacts with host FKBP8. Interacts with host VAPB. Interacts with host EIF2AK2/PKR; this interaction leads to disruption of EIF2AK2 dimerization by NS5A and probably allows the virus to evade the innate immune response. Interacts (via N-terminus) with host PACSIN2 (via N-terminus); this interaction attenuates protein kinase C alpha-mediated phosphorylation of PACSIN2 by disrupting the interaction between PACSIN2 and PRKCA. Interacts (via N-terminus) with host SRC kinase (via SH2 domain). Interacts with most Src-family kinases. Interacts with host IFI27 and SKP2; promotes the ubiquitin-mediated proteasomal degradation of NS5A. Interacts (via N-terminus) with non-structural protein 4A. Interacts with non-structural protein 4B. Interacts with RNA-directed RNA polymerase. Part of the replication complex composed of NS2, NS3, NS4A, NS4B, NS5A and the RNA-directed RNA polymerase embedded in an ER-derived membranous web. Interacts with host GPS2. Interacts with host TNFRSF21; this interaction allows the modulation by the virus of JNK, p38 MAPK, STAT3, and Akt signaling pathways in a DR6-dependent manner. Interacts (via N-terminus) with host CIDEB (via N-terminus); this interaction seems to regulate the association of HCV particles with APOE. Interacts with host CHKA/Choline Kinase-alpha; CHKA bridges host PI4KA and NS5A and potentiates NS5A-stimulated PI4KA activity, which then facilitates the targeting of the ternary complex to the ER for viral replication. Interacts with host SPSB2 (via C-terminus); this interaction targets NS5A for ubiquitination and degradation. Part of the viral assembly initiation complex composed of NS2, E1, E2, NS3, NS4A, NS5A and the mature core protein. It depends on Zn(2+) as a cofactor. The cofactor is Mg(2+). Specific enzymatic cleavages in vivo yield mature proteins. The structural proteins, core, E1, E2 and p7 are produced by proteolytic processing by host signal peptidases. The core protein precursor is synthesized as a 23 kDa, which is retained in the ER membrane through the hydrophobic signal peptide. Cleavage by the signal peptidase releases the 21 kDa mature core protein. The cleavage of the core protein precursor occurs between aminoacids 176 and 188 but the exact cleavage site is not known. Some degraded forms of the core protein appear as well during the course of infection. The other proteins (p7, NS2, NS3, NS4A, NS4B, NS5A and NS5B) are cleaved by the viral proteases. Autoprocessing between NS2 and NS3 is mediated by the NS2 cysteine protease catalytic domain and regulated by the NS3 N-terminal domain. In terms of processing, phosphorylated by host PKC and PKA. Post-translationally, ubiquitinated; mediated by UBE3A and leading to core protein subsequent proteasomal degradation. Highly N-glycosylated. In terms of processing, palmitoylation is required for NS2/3 autoprocessing and E2 recruitment to membranes. Post-translationally, palmitoylated. This modification may play a role in its polymerization or in protein-protein interactions. Cleaved by host caspases which are probably activated by the viral infection. In terms of processing, ubiquitinated. Ubiquitination, most probably at Lys-2350, mediated by host IFI27 and SKP2 leads to proteasomal degradation, restricting viral infection. Ubiquitination by host TRIM22 leads to interruption of viral replication. Post-translationally, phosphorylated on serines in a basal form termed p56. p58 is a hyperphosphorylated form of p56. p56 and p58 coexist in the cell in roughly equivalent amounts. Hyperphosphorylation is dependent on the presence of NS4A. Host CSNK1A1/CKI-alpha or RPS6KB1 kinases may be responsible for NS5A phosphorylation. Tyrosine phosphorylation is essential for the interaction with host SRC. In terms of processing, the N-terminus is phosphorylated by host PRK2/PKN2.

Its subcellular location is the host endoplasmic reticulum membrane. The protein localises to the host mitochondrion membrane. It is found in the virion. It localises to the host cytoplasm. The protein resides in the host nucleus. Its subcellular location is the host lipid droplet. The protein localises to the virion membrane. It is found in the host mitochondrion. It localises to the host cell membrane. The protein resides in the host perinuclear region. It carries out the reaction Hydrolysis of four peptide bonds in the viral precursor polyprotein, commonly with Asp or Glu in the P6 position, Cys or Thr in P1 and Ser or Ala in P1'.. The enzyme catalyses a ribonucleoside 5'-triphosphate + H2O = a ribonucleoside 5'-diphosphate + phosphate + H(+). The catalysed reaction is ATP + H2O = ADP + phosphate + H(+). It catalyses the reaction RNA(n) + a ribonucleoside 5'-triphosphate = RNA(n+1) + diphosphate. Inhibited by the antiviral drug hexamethylene amiloride. Inhibition by amantadine appears to be genotype-dependent. Also inhibited by long-alkyl-chain iminosugar derivatives. Its activity is regulated as follows. Activity is up-regulated by PRK2/PKN2-mediated phosphorylation. Functionally, packages viral RNA to form a viral nucleocapsid, and promotes virion budding. Participates in the viral particle production as a result of its interaction with the non-structural protein 5A. Binds RNA and may function as a RNA chaperone to induce the RNA structural rearrangements taking place during virus replication. Modulates viral translation initiation by interacting with viral IRES and 40S ribosomal subunit. Affects various cell signaling pathways, host immunity and lipid metabolism. Prevents the establishment of cellular antiviral state by blocking the interferon-alpha/beta (IFN-alpha/beta) and IFN-gamma signaling pathways and by blocking the formation of phosphorylated STAT1 and promoting ubiquitin-mediated proteasome-dependent degradation of STAT1. Activates STAT3 leading to cellular transformation. Regulates the activity of cellular genes, including c-myc and c-fos. May repress the promoter of p53, and sequester CREB3 and SP110 isoform 3/Sp110b in the cytoplasm. Represses cell cycle negative regulating factor CDKN1A, thereby interrupting an important check point of normal cell cycle regulation. Targets transcription factors involved in the regulation of inflammatory responses and in the immune response: suppresses NF-kappa-B activation, and activates AP-1. Binds to dendritic cells (DCs) via C1QR1, resulting in down-regulation of T-lymphocytes proliferation. Alters lipid metabolism by interacting with hepatocellular proteins involved in lipid accumulation and storage. Induces up-regulation of FAS promoter activity, and thereby contributes to the increased triglyceride accumulation in hepatocytes (steatosis). In terms of biological role, forms a heterodimer with envelope glycoprotein E2, which mediates virus attachment to the host cell, virion internalization through clathrin-dependent endocytosis and fusion with host membrane. Fusion with the host cell is most likely mediated by both E1 and E2, through conformational rearrangements of the heterodimer required for fusion rather than a classical class II fusion mechanism. E1/E2 heterodimer binds host apolipoproteins such as APOB and APOE thereby forming a lipo-viro-particle (LVP). APOE associated to the LVP allows the initial virus attachment to cell surface receptors such as the heparan sulfate proteoglycans (HSPGs), syndecan-1 (SDC1), syndecan-1 (SDC2), the low-density lipoprotein receptor (LDLR) and scavenger receptor class B type I (SCARB1). The cholesterol transfer activity of SCARB1 allows E2 exposure and binding of E2 to SCARB1 and the tetraspanin CD81. E1/E2 heterodimer binding on CD81 activates the epithelial growth factor receptor (EGFR) signaling pathway. Diffusion of the complex E1-E2-EGFR-SCARB1-CD81 to the cell lateral membrane allows further interaction with Claudin 1 (CLDN1) and occludin (OCLN) to finally trigger HCV entry. Forms a heterodimer with envelope glycoprotein E1, which mediates virus attachment to the host cell, virion internalization through clathrin-dependent endocytosis and fusion with host membrane. Fusion with the host cell is most likely mediated by both E1 and E2, through conformational rearrangements of the heterodimer required for fusion rather than a classical class II fusion mechanism. The interaction between envelope glycoprotein E2 and host apolipoprotein E/APOE allows the proper assembly, maturation and infectivity of the viral particles. This interaction is probably promoted via the up-regulation of cellular autophagy by the virus. E1/E2 heterodimer binds host apolipoproteins such as APOB and APOE thereby forming a lipo-viro-particle (LVP). APOE associated to the LVP allows the initial virus attachment to cell surface receptors such as the heparan sulfate proteoglycans (HSPGs), syndecan-1 (SDC1), syndecan-1 (SDC2), the low-density lipoprotein receptor (LDLR) and scavenger receptor class B type I (SCARB1). The cholesterol transfer activity of SCARB1 allows E2 exposure and binding of E2 to SCARB1 and the tetraspanin CD81. E1/E2 heterodimer binding on CD81 activates the epithelial growth factor receptor (EGFR) signaling pathway. Diffusion of the complex E1-E2-EGFR-SCARB1-CD81 to the cell lateral membrane allows further interaction with Claudin 1 (CLDN1) and occludin (OCLN) to finally trigger HCV entry. Inhibits host EIF2AK2/PKR activation, preventing the establishment of an antiviral state. Viral ligand for CD209/DC-SIGN and CLEC4M/DC-SIGNR, which are respectively found on dendritic cells (DCs), and on liver sinusoidal endothelial cells and macrophage-like cells of lymph node sinuses. These interactions allow the capture of circulating HCV particles by these cells and subsequent facilitated transmission to permissive cells such as hepatocytes and lymphocyte subpopulations. The interaction between E2 and host amino acid transporter complex formed by SLC3A2 and SLC7A5/LAT1 may facilitate viral entry into host cell. Its function is as follows. Ion channel protein that acts as a viroporin and plays an essential role in the assembly, envelopment and secretion of viral particles. Regulates the host cell secretory pathway, which induces the intracellular retention of viral glycoproteins and favors assembly of viral particles. Creates a pore in acidic organelles and releases Ca(2+) and H(+) in the cytoplasm of infected cells, leading to a productive viral infection. High levels of cytoplasmic Ca(2+) may trigger membrane trafficking and transport of viral ER-associated proteins to viroplasms, sites of viral genome replication. This ionic imbalance induces the assembly of the inflammasome complex, which triggers the maturation of pro-IL-1beta into IL-1beta through the action of caspase-1. Targets also host mitochondria and induces mitochondrial depolarization. In addition of its role as a viroporin, acts as a lipid raft adhesion factor. Functionally, cysteine protease required for the proteolytic auto-cleavage between the non-structural proteins NS2 and NS3. The N-terminus of NS3 is required for the function of NS2 protease (active region NS2-3). Promotes the initiation of viral particle assembly by mediating the interaction between structural and non-structural proteins. In terms of biological role, displays three enzymatic activities: serine protease with a chymotrypsin-like fold, NTPase and RNA helicase. NS3 serine protease, in association with NS4A, is responsible for the cleavages of NS3-NS4A, NS4A-NS4B, NS4B-NS5A and NS5A-NS5B. The NS3/NS4A complex prevents phosphorylation of host IRF3, thus preventing the establishment of dsRNA induced antiviral state. The NS3/NS4A complex induces host amino acid transporter component SLC3A2, thus contributing to HCV propagation. NS3 RNA helicase binds to RNA and unwinds both dsDNA and dsRNA in the 3' to 5' direction, and likely resolves RNA complicated stable secondary structures in the template strand. Binds a single ATP and catalyzes the unzipping of a single base pair of dsRNA. Inhibits host antiviral proteins TBK1 and IRF3 thereby preventing the establishment of an antiviral state. Cleaves host MAVS/CARDIF thereby preventing the establishment of an antiviral state. Cleaves host TICAM1/TRIF, thereby disrupting TLR3 signaling and preventing the establishment of an antiviral state. Peptide cofactor which forms a non-covalent complex with the N-terminal of NS3 serine protease. The NS3/NS4A complex prevents phosphorylation of host IRF3, thus preventing the establishment of dsRNA induced antiviral state. The NS3/NS4A complex induces host amino acid transporter component SLC3A2, thus contributing to HCV propagation. Its function is as follows. Induces a specific membrane alteration that serves as a scaffold for the virus replication complex. This membrane alteration gives rise to the so-called ER-derived membranous web that contains the replication complex. NS4B self-interaction contributes to its function in membranous web formation. Promotes host TRIF protein degradation in a CASP8-dependent manner thereby inhibiting host TLR3-mediated interferon signaling. Disrupts the interaction between STING and TBK1 contributing to the inhibition of interferon signaling. Functionally, phosphorylated protein that is indispensable for viral replication and assembly. Both hypo- and hyperphosphorylated states are required for the viral life cycle. The hyperphosphorylated form of NS5A is an inhibitor of viral replication. Involved in RNA-binding and especially in binding to the viral genome. Zinc is essential for RNA-binding. Participates in the viral particle production as a result of its interaction with the viral mature core protein. Its interaction with host VAPB may target the viral replication complex to vesicles. Down-regulates viral IRES translation initiation. Mediates interferon resistance, presumably by interacting with and inhibiting host EIF2AK2/PKR. Prevents BIN1-induced apoptosis. Acts as a transcriptional activator of some host genes important for viral replication when localized in the nucleus. Via the interaction with host PACSIN2, modulates lipid droplet formation in order to promote virion assembly. Modulates TNFRSF21/DR6 signaling pathway for viral propagation. In terms of biological role, RNA-dependent RNA polymerase that performs primer-template recognition and RNA synthesis during viral replication. Initiates RNA transcription/replication at a flavin adenine dinucleotide (FAD), resulting in a 5'- FAD cap on viral RNAs. In this way, recognition of viral 5' RNA by host pattern recognition receptors can be bypassed, thereby evading activation of antiviral pathways. In Hepatitis C virus genotype 1b (isolate Con1) (HCV), this protein is Genome polyprotein.